A 404-amino-acid chain; its full sequence is Glycerol-1-phosphate dehydrogenase [NAD(P)+] (404 aa).

Residues aspartate 55, 117 to 121, and 139 to 142 contribute to the NAD(+) site; these read GTVHD and TAPS. Residue aspartate 144 coordinates substrate. Position 148 (serine 148) interacts with NAD(+). Aspartate 191 provides a ligand contact to substrate. Ni(2+) contacts are provided by aspartate 191 and histidine 271. Residue histidine 275 coordinates substrate. Histidine 291 lines the Ni(2+) pocket.

This sequence belongs to the glycerol-1-phosphate dehydrogenase family. As to quaternary structure, homodimer. Requires Ni(2+) as cofactor.

The protein resides in the cytoplasm. The catalysed reaction is sn-glycerol 1-phosphate + NAD(+) = dihydroxyacetone phosphate + NADH + H(+). The enzyme catalyses sn-glycerol 1-phosphate + NADP(+) = dihydroxyacetone phosphate + NADPH + H(+). Functionally, catalyzes the NAD(P)H-dependent reduction of dihydroxyacetonephosphate (DHAP or glycerone phosphate) to glycerol 1-phosphate (G1P). The G1P thus generated is probably used for the synthesis of phosphoglycerolipids in Gram-positive bacterial species. This is Glycerol-1-phosphate dehydrogenase [NAD(P)+] from Geobacillus thermodenitrificans (strain NG80-2).